The sequence spans 345 residues: Class I histocompatibility antigen, F10 alpha chain (345 aa).

A signal peptide spans 1 to 22 (MGPCGALGLGLLLAAVCGAAAP). The tract at residues 23–110 (ELHTLRYIQT…ILQRRYNQTG (88 aa)) is alpha-1. Over 23–301 (ELHTLRYIQT…WEPPQPNLVP (279 aa)) the chain is Extracellular. Residues Asn-59 and Asn-107 are each glycosylated (N-linked (GlcNAc...) asparagine). The interval 111–201 (GSHTVQWMYG…EYGKAELGRR (91 aa)) is alpha-2. 2 cysteine pairs are disulfide-bonded: Cys-121–Cys-183 and Cys-221–Cys-277. The segment at 202-292 (ERPEVRVWGK…SLPQPGLYSW (91 aa)) is alpha-3. Residues 204–293 (PEVRVWGKEA…LPQPGLYSWE (90 aa)) form the Ig-like C1-type domain. A connecting peptide region spans residues 293 to 301 (EPPQPNLVP). Residues 302–324 (IVAGVAVAIVAIAIMVGVGFIIY) traverse the membrane as a helical segment. Topologically, residues 325–345 (RRHAGKKGKGYNIAPGSNPAI) are cytoplasmic.

The protein belongs to the MHC class I family. In terms of assembly, heterodimer of an alpha chain and a beta chain (beta-2-microglobulin).

The protein localises to the membrane. In terms of biological role, involved in the presentation of foreign antigens to the immune system. In Gallus gallus (Chicken), this protein is Class I histocompatibility antigen, F10 alpha chain.